Reading from the N-terminus, the 285-residue chain is uncharacterized protein (285 aa).

Residues 184–282 (HSICNWVQDN…GLTPGEYSAR (99 aa)) enclose the HTH araC/xylS-type domain. DNA-binding regions (H-T-H motif) lie at residues 201 to 222 (ESVAQFFNITPNHLSKLFAQHG) and 249 to 272 (IHEVAQRCGFPDSDYFCRVFRRQF).

This is an uncharacterized protein from Escherichia coli (strain K12).